The primary structure comprises 1232 residues: DNA topoisomerase 2 (1232 aa).

ATP contacts are provided by residues N65, N94, 122–124 (SSN), 135–142 (GRHGYGAK), and 352–354 (QNK). Residues 432–546 (RTLIVTEGDS…SLLNRNPGFI (115 aa)) enclose the Toprim domain. Residues E438, D515, and D517 each coordinate Mg(2+). The 417-residue stretch at 681 to 1097 (LAHAVDGLKP…APVQMWLDEL (417 aa)) folds into the Topo IIA-type catalytic domain. Y771 acts as the O-(5'-phospho-DNA)-tyrosine intermediate in catalysis. The segment at 952-961 (SLTQRIYING) is interaction with DNA. The segment at 1161-1184 (YVPPPPSKRPHVGQSVGGGGGGGS) is disordered. Residues 1175–1184 (SVGGGGGGGS) show a composition bias toward gly residues.

The protein belongs to the type II topoisomerase family. In terms of assembly, homodimer. Requires Mg(2+) as cofactor. The cofactor is Mn(2+). Ca(2+) is required as a cofactor.

It localises to the nucleus. It catalyses the reaction ATP-dependent breakage, passage and rejoining of double-stranded DNA.. In terms of biological role, control of topological states of DNA by transient breakage and subsequent rejoining of DNA strands. Topoisomerase II makes double-strand breaks. The polypeptide is DNA topoisomerase 2 (TOP2) (Trypanosoma cruzi).